A 206-amino-acid polypeptide reads, in one-letter code: Cytochrome c oxidase assembly factor 8 (206 aa).

The transit peptide at 1–39 (MLPCAAGARGRGAMVVLRAGKKTFLPPLCRAFACRGCQL) directs the protein to the mitochondrion.

This sequence belongs to the COA8 family. N-terminal mitochondrial targeting sequence is cleaved from the mature protein once in the mitochondrion. In terms of processing, in normal conditions, the cytoplasmic precursor protein is rapidly degraded by the ubiquitination-proteasome system (UPS). Oxidative stress induces protein stabilization and import into mitochondria where it protects COX from degradation. As to expression, expressed in fibroblasts.

It localises to the mitochondrion inner membrane. In terms of biological role, required for cytochrome c complex (COX) IV assembly and function Protects COX assembly from oxidation-induced degradation, COX being the terminal component of the mitochondrial respiratory chain. In Homo sapiens (Human), this protein is Cytochrome c oxidase assembly factor 8.